The primary structure comprises 607 residues: Elongation factor 4 (607 aa).

Positions 11 to 193 (EKIRNFSIIA…QIVEKVPAPT (183 aa)) constitute a tr-type G domain. Residues 23–28 (DHGKST) and 140–143 (NKID) each bind GTP.

It belongs to the TRAFAC class translation factor GTPase superfamily. Classic translation factor GTPase family. LepA subfamily.

It localises to the cell membrane. The catalysed reaction is GTP + H2O = GDP + phosphate + H(+). Functionally, required for accurate and efficient protein synthesis under certain stress conditions. May act as a fidelity factor of the translation reaction, by catalyzing a one-codon backward translocation of tRNAs on improperly translocated ribosomes. Back-translocation proceeds from a post-translocation (POST) complex to a pre-translocation (PRE) complex, thus giving elongation factor G a second chance to translocate the tRNAs correctly. Binds to ribosomes in a GTP-dependent manner. This is Elongation factor 4 from Streptococcus pneumoniae serotype 19F (strain G54).